A 565-amino-acid chain; its full sequence is Zinc finger protein 512 (565 aa).

The disordered stretch occupies residues 1-30; sequence MSSRLGAVPATSGPTTFKQQRSTRIVGAKN. Residues 12–23 show a composition bias toward polar residues; that stretch reads SGPTTFKQQRST. Residues Lys18 and Lys83 each participate in a glycyl lysine isopeptide (Lys-Gly) (interchain with G-Cter in SUMO2) cross-link. Positions 85 to 147 are disordered; the sequence is AATSHVEGSG…QARRIRKEPP (63 aa). Residues 118-129 show a composition bias toward basic residues; the sequence is KKHKLYGRKQRP. The C2H2-type 1 zinc-finger motif lies at 196–219; sequence FTCHHCGKQLRSLAGMKYHVMANH. Lys226 is covalently cross-linked (Glycyl lysine isopeptide (Lys-Gly) (interchain with G-Cter in SUMO2)). The C2H2-type 2 zinc-finger motif lies at 286–309; it reads LKCHHCGKPYRSKAGLAYHLRSEH. Lys332 participates in a covalent cross-link: Glycyl lysine isopeptide (Lys-Gly) (interchain with G-Cter in SUMO2). The segment at 405 to 429 adopts a C2H2-type 3; atypical zinc-finger fold; the sequence is IQCPNQGCEAVYSSVSGLKAHLGSC. The segment at 439–462 adopts a C2H2-type 4 zinc-finger fold; the sequence is YKCLLCQKEFVSESGVKYHINSVH. The span at 484 to 493 shows a compositional bias: basic and acidic residues; it reads KQRQQEEEKR. The disordered stretch occupies residues 484 to 565; that stretch reads KQRQQEEEKR…PKTNHKRGRK (82 aa). Over residues 494-507 the composition is skewed to basic residues; sequence RQQHRSRRSLRRRQ. The segment covering 522–531 has biased composition (basic and acidic residues); sequence VGKDQRRNEE. A compositionally biased stretch (basic residues) spans 554-565; the sequence is KPPKTNHKRGRK.

The protein belongs to the krueppel C2H2-type zinc-finger protein family.

Its subcellular location is the nucleus. May be involved in transcriptional regulation. This Macaca fascicularis (Crab-eating macaque) protein is Zinc finger protein 512 (ZNF512).